A 229-amino-acid chain; its full sequence is 2-C-methyl-D-erythritol 4-phosphate cytidylyltransferase (229 aa).

The protein belongs to the IspD/TarI cytidylyltransferase family. IspD subfamily.

It catalyses the reaction 2-C-methyl-D-erythritol 4-phosphate + CTP + H(+) = 4-CDP-2-C-methyl-D-erythritol + diphosphate. It functions in the pathway isoprenoid biosynthesis; isopentenyl diphosphate biosynthesis via DXP pathway; isopentenyl diphosphate from 1-deoxy-D-xylulose 5-phosphate: step 2/6. In terms of biological role, catalyzes the formation of 4-diphosphocytidyl-2-C-methyl-D-erythritol from CTP and 2-C-methyl-D-erythritol 4-phosphate (MEP). This is 2-C-methyl-D-erythritol 4-phosphate cytidylyltransferase from Clostridium botulinum (strain Loch Maree / Type A3).